The sequence spans 347 residues: GMP reductase (347 aa).

108 to 131 lines the NADP(+) pocket; the sequence is ADFEKTVQILALNPALNFVCIDVA. The K(+) site is built by G181 and G183. C186 functions as the Thioimidate intermediate in the catalytic mechanism. 216–239 lines the NADP(+) pocket; it reads IVSDGGCTMPGDVAKAFGGGADFV.

The protein belongs to the IMPDH/GMPR family. GuaC type 1 subfamily. Homotetramer.

It carries out the reaction IMP + NH4(+) + NADP(+) = GMP + NADPH + 2 H(+). In terms of biological role, catalyzes the irreversible NADPH-dependent deamination of GMP to IMP. It functions in the conversion of nucleobase, nucleoside and nucleotide derivatives of G to A nucleotides, and in maintaining the intracellular balance of A and G nucleotides. This is GMP reductase from Salmonella paratyphi C (strain RKS4594).